The following is a 515-amino-acid chain: Maturase K (515 aa).

Belongs to the intron maturase 2 family. MatK subfamily.

It localises to the plastid. The protein resides in the chloroplast. Usually encoded in the trnK tRNA gene intron. Probably assists in splicing its own and other chloroplast group II introns. The polypeptide is Maturase K (Pinus contorta (Shore pine)).